The primary structure comprises 220 residues: Adenylate kinase (220 aa).

10–15 is a binding site for ATP; that stretch reads GSGKST. Residues 30–59 form an NMP region; sequence SSGDLIRKEIAEGTPLGREMQAYLARGDLI. AMP contacts are provided by residues Ser-31, Arg-36, 57 to 59, 83 to 86, and Gln-90; these read DLI and GYPR. An LID region spans residues 124 to 161; the sequence is GRRICPKCGAVYHVEFNPPKIPGRCDVCGAELVQREDD. Position 125 (Arg-125) interacts with ATP. Zn(2+) is bound by residues Cys-128 and Cys-131. 134-135 is a binding site for ATP; sequence VY. Zn(2+)-binding residues include Cys-148 and Cys-151. Positions 158 and 169 each coordinate AMP. Residue Gly-197 participates in ATP binding.

Belongs to the adenylate kinase family. As to quaternary structure, monomer.

It is found in the cytoplasm. The catalysed reaction is AMP + ATP = 2 ADP. It participates in purine metabolism; AMP biosynthesis via salvage pathway; AMP from ADP: step 1/1. Catalyzes the reversible transfer of the terminal phosphate group between ATP and AMP. Plays an important role in cellular energy homeostasis and in adenine nucleotide metabolism. The sequence is that of Adenylate kinase from Pyrococcus furiosus (strain ATCC 43587 / DSM 3638 / JCM 8422 / Vc1).